Here is a 256-residue protein sequence, read N- to C-terminus: 5-oxoprolinase subunit A (256 aa).

The protein belongs to the LamB/PxpA family. As to quaternary structure, forms a complex composed of PxpA, PxpB and PxpC.

The enzyme catalyses 5-oxo-L-proline + ATP + 2 H2O = L-glutamate + ADP + phosphate + H(+). In terms of biological role, catalyzes the cleavage of 5-oxoproline to form L-glutamate coupled to the hydrolysis of ATP to ADP and inorganic phosphate. This Geobacillus kaustophilus (strain HTA426) protein is 5-oxoprolinase subunit A.